We begin with the raw amino-acid sequence, 495 residues long: GTPase Der (495 aa).

EngA-type G domains are found at residues 3-166 (PVIA…MDAE) and 208-381 (IKLA…DCST). GTP-binding positions include 9–16 (GRPNVGKS), 56–60 (DTGGI), 118–121 (NKTD), 214–221 (GRPNVGKS), 261–265 (DTAGV), and 326–329 (NKWD). Residues 382 to 466 (KRVGTSLLTR…PIRIQFKEGE (85 aa)) form the KH-like domain.

Belongs to the TRAFAC class TrmE-Era-EngA-EngB-Septin-like GTPase superfamily. EngA (Der) GTPase family. As to quaternary structure, associates with the 50S ribosomal subunit.

Functionally, GTPase that plays an essential role in the late steps of ribosome biogenesis. The chain is GTPase Der from Yersinia pseudotuberculosis serotype O:3 (strain YPIII).